We begin with the raw amino-acid sequence, 144 residues long: Sentan (144 aa).

The tract at residues 1-31 is disordered; that stretch reads MCGCRASVPSTKHYSVNPAPTTRSPPAAAGM. The span at 18 to 29 shows a compositional bias: low complexity; it reads PAPTTRSPPAAA.

It belongs to the S-100 family.

It localises to the cell projection. The protein resides in the cilium. May be a component of the linker structure that bridges the ciliary membrane and peripheral singlet microtubules. The chain is Sentan from Gallus gallus (Chicken).